Consider the following 41-residue polypeptide: Photosystem I reaction center subunit IX (41 aa).

The chain crosses the membrane as a helical span at residues 7–27 (YLSSAPILATIWFAITAGILI).

Belongs to the PsaJ family.

The protein localises to the cellular thylakoid membrane. Functionally, may help in the organization of the PsaE and PsaF subunits. This Synechococcus sp. (strain ATCC 27144 / PCC 6301 / SAUG 1402/1) (Anacystis nidulans) protein is Photosystem I reaction center subunit IX.